Consider the following 144-residue polypeptide: UPF0102 protein sce2912 (144 aa).

It belongs to the UPF0102 family.

The sequence is that of UPF0102 protein sce2912 from Sorangium cellulosum (strain So ce56) (Polyangium cellulosum (strain So ce56)).